Here is a 384-residue protein sequence, read N- to C-terminus: S-adenosylmethionine synthase (384 aa).

Histidine 15 is an ATP binding site. Mg(2+) is bound at residue aspartate 17. Glutamate 43 is a K(+) binding site. L-methionine-binding residues include glutamate 56 and glutamine 99. The tract at residues 99–109 (QSPDINQGVDR) is flexible loop. ATP-binding positions include 164 to 166 (DAK), 230 to 231 (RF), aspartate 239, 245 to 246 (RK), alanine 262, and lysine 266. An L-methionine-binding site is contributed by aspartate 239. Lysine 270 lines the L-methionine pocket.

Belongs to the AdoMet synthase family. As to quaternary structure, homotetramer; dimer of dimers. Mg(2+) is required as a cofactor. The cofactor is K(+).

It localises to the cytoplasm. It catalyses the reaction L-methionine + ATP + H2O = S-adenosyl-L-methionine + phosphate + diphosphate. Its pathway is amino-acid biosynthesis; S-adenosyl-L-methionine biosynthesis; S-adenosyl-L-methionine from L-methionine: step 1/1. Its function is as follows. Catalyzes the formation of S-adenosylmethionine (AdoMet) from methionine and ATP. The overall synthetic reaction is composed of two sequential steps, AdoMet formation and the subsequent tripolyphosphate hydrolysis which occurs prior to release of AdoMet from the enzyme. In Citrobacter koseri (strain ATCC BAA-895 / CDC 4225-83 / SGSC4696), this protein is S-adenosylmethionine synthase.